A 341-amino-acid polypeptide reads, in one-letter code: tRNA N6-adenosine threonylcarbamoyltransferase (341 aa).

Fe cation contacts are provided by histidine 111 and histidine 115. Substrate contacts are provided by residues 134–138 (LVSGG), aspartate 167, glycine 180, and asparagine 272. Position 300 (aspartate 300) interacts with Fe cation.

This sequence belongs to the KAE1 / TsaD family. Fe(2+) is required as a cofactor.

The protein resides in the cytoplasm. The enzyme catalyses L-threonylcarbamoyladenylate + adenosine(37) in tRNA = N(6)-L-threonylcarbamoyladenosine(37) in tRNA + AMP + H(+). In terms of biological role, required for the formation of a threonylcarbamoyl group on adenosine at position 37 (t(6)A37) in tRNAs that read codons beginning with adenine. Is involved in the transfer of the threonylcarbamoyl moiety of threonylcarbamoyl-AMP (TC-AMP) to the N6 group of A37, together with TsaE and TsaB. TsaD likely plays a direct catalytic role in this reaction. In Edwardsiella ictaluri (strain 93-146), this protein is tRNA N6-adenosine threonylcarbamoyltransferase.